We begin with the raw amino-acid sequence, 340 residues long: Protein AC11 (340 aa).

Plays an essential role in nucleocapsid egress from the host nucleus to form the budded virion (BV). Does not participate in nucleocapsid formation. This chain is Protein AC11, found in Autographa californica nuclear polyhedrosis virus (AcMNPV).